We begin with the raw amino-acid sequence, 529 residues long: Bifunctional purine biosynthesis protein PurH (529 aa).

The 148-residue stretch at 1–148 (MQQRRPVRRA…KNHKDVAIVV (148 aa)) folds into the MGS-like domain. Residue lysine 287 is modified to N6-acetyllysine.

Belongs to the PurH family.

It catalyses the reaction (6R)-10-formyltetrahydrofolate + 5-amino-1-(5-phospho-beta-D-ribosyl)imidazole-4-carboxamide = 5-formamido-1-(5-phospho-D-ribosyl)imidazole-4-carboxamide + (6S)-5,6,7,8-tetrahydrofolate. The enzyme catalyses IMP + H2O = 5-formamido-1-(5-phospho-D-ribosyl)imidazole-4-carboxamide. It functions in the pathway purine metabolism; IMP biosynthesis via de novo pathway; 5-formamido-1-(5-phospho-D-ribosyl)imidazole-4-carboxamide from 5-amino-1-(5-phospho-D-ribosyl)imidazole-4-carboxamide (10-formyl THF route): step 1/1. The protein operates within purine metabolism; IMP biosynthesis via de novo pathway; IMP from 5-formamido-1-(5-phospho-D-ribosyl)imidazole-4-carboxamide: step 1/1. This is Bifunctional purine biosynthesis protein PurH from Escherichia coli O127:H6 (strain E2348/69 / EPEC).